The following is a 789-amino-acid chain: Mediator of RNA polymerase II transcription subunit 15 (789 aa).

An interaction with SREBF1 region spans residues 9-73 (DWRSAAFRQK…IHFRDIHNKK (65 aa)). 2 disordered regions span residues 88–140 (LTGG…APHG) and 257–326 (QQQA…PLVS). Over residues 89–102 (TGGPTPGAAGIGMP) the composition is skewed to low complexity. Over residues 108–118 (QSLGGMGGLGA) the composition is skewed to gly residues. Composition is skewed to low complexity over residues 257-274 (QQQA…SMQQ), 282-291 (ALPQQLSQLH), and 302-326 (AQQS…PLVS). Arg-347 is subject to Asymmetric dimethylarginine. The disordered stretch occupies residues 404-531 (RFPPTSTMSA…PAGSSQAEEQ (128 aa)). The segment covering 407 to 426 (PTSTMSAGPSSSISLGGQPT) has biased composition (polar residues). Residues 427–450 (TQVSQSSLTMLSSPSPGQQVQTPQ) show a composition bias toward low complexity. The span at 451 to 463 (SMPPPPQPSPQPG) shows a compositional bias: pro residues. Residues 464–483 (SQPNSNVSSGPAPSPSSFLP) show a composition bias toward low complexity. Polar residues-rich tracts occupy residues 494 to 504 (VTARTPQNFSV) and 512 to 530 (TPVN…QAEE). A Nuclear localization signal motif is present at residues 548–565 (RRMINKIDKNEDRKKDLS). Thr-604 bears the Phosphothreonine mark.

It belongs to the Mediator complex subunit 15 family. Component of the Mediator complex, which is composed of MED1, MED4, MED6, MED7, MED8, MED9, MED10, MED11, MED12, MED13, MED13L, MED14, MED15, MED16, MED17, MED18, MED19, MED20, MED21, MED22, MED23, MED24, MED25, MED26, MED27, MED29, MED30, MED31, CCNC, CDK8 and CDC2L6/CDK11. The MED12, MED13, CCNC and CDK8 subunits form a distinct module termed the CDK8 module. Mediator containing the CDK8 module is less active than Mediator lacking this module in supporting transcriptional activation. Individual preparations of the Mediator complex lacking one or more distinct subunits have been variously termed ARC, CRSP, DRIP, PC2, SMCC and TRAP. Interacts with SMAD2, SMAD3, SREBF1 and SREBF2. Interacts with WWTR1. Interacts with TRIM11. Ubiquitinated by TRIM11, leading to proteasomal degradation.

It is found in the cytoplasm. Its subcellular location is the nucleus. Functionally, component of the Mediator complex, a coactivator involved in the regulated transcription of nearly all RNA polymerase II-dependent genes. Mediator functions as a bridge to convey information from gene-specific regulatory proteins to the basal RNA polymerase II transcription machinery. Mediator is recruited to promoters by direct interactions with regulatory proteins and serves as a scaffold for the assembly of a functional preinitiation complex with RNA polymerase II and the general transcription factors. Required for cholesterol-dependent gene regulation. Positively regulates the Nodal signaling pathway. This chain is Mediator of RNA polymerase II transcription subunit 15 (Med15), found in Mus musculus (Mouse).